A 473-amino-acid polypeptide reads, in one-letter code: H(+)/Cl(-) exchange transporter ClcA (473 aa).

At 1-32 (MKTDTPSLETPQAARLRRRQLIRQLLERDKTP) the chain is on the cytoplasmic side. Residues 33 to 69 (LAILFMAAVVGTLVGLAAVAFDKGVAWLQNQRMGALV) traverse the membrane as a helical segment. The Periplasmic portion of the chain corresponds to 70–76 (HTADNYP). Residues 77-100 (LLLTVAFLCSAVLAMFGYFLVRKY) form a helical membrane-spanning segment. A Selectivity filter part_1 motif is present at residues 106–110 (GSGIP). Ser-107 contacts chloride. An intramembrane region (helical) is located at residues 109–116 (IPEIEGAL). The Cytoplasmic segment spans residues 117–123 (EDQRPVR). 2 consecutive transmembrane segments (helical) span residues 124–141 (WWRV…TLGG) and 148–166 (EGPT…LDIF). A Selectivity filter part_2 motif is present at residues 146–150 (GREGP). Over 167-176 (RLKGDEARHT) the chain is Cytoplasmic. Intramembrane regions (helical) lie at residues 177–189 (LLAT…LAAA) and 193–201 (PLAGILFII). The Cytoplasmic portion of the chain corresponds to 202-214 (EEMRPQFRYTLIS). A helical transmembrane segment spans residues 215–232 (IKAVFIGVIMSTIMYRIF). The Periplasmic segment spans residues 233 to 252 (NHEVALIDVGKLSDAPLNTL). The chain crosses the membrane as a helical span at residues 253-281 (WLYLILGIIFGIFGPIFNKWVLGMQDLLH). The Cytoplasmic portion of the chain corresponds to 282–287 (RVHGGN). Residues 288–309 (ITKWVLMGGAIGGLCGLLGFVA) form a helical membrane-spanning segment. Residues 310-329 (PATSGGGFNLIPIATAGNFS) are Periplasmic-facing. A run of 2 helical transmembrane segments spans residues 330–349 (MGML…LCFS) and 355–376 (GIFA…MVAV). Residues 355–359 (GIFAP) carry the Selectivity filter part_3 motif. Ile-356 and Phe-357 together coordinate chloride. Over 377–386 (ELFPQYHLEA) the chain is Periplasmic. Positions 387-401 (GTFAIAGMGALLAAS) form an intramembrane region, helical. The segment at residues 402 to 404 (IRA) is an intramembrane region (note=Loop between two helices). The segment at residues 405–416 (PLTGIILVLEMT) is an intramembrane region (helical). Positions 417 to 421 (DNYQL) form an intramembrane region, note=Loop between two helices. The helical transmembrane segment at 422-438 (ILPMIITGLGATLLAQF) threads the bilayer. At 439 to 473 (TGGKPLYSAILARTLAKQEAEQLARSKAASASENT) the chain is on the cytoplasmic side. Tyr-445 serves as a coordination point for chloride.

Belongs to the chloride channel (TC 2.A.49) family. ClcA subfamily. Homodimer.

The protein localises to the cell inner membrane. The enzyme catalyses 2 chloride(in) + H(+)(out) = 2 chloride(out) + H(+)(in). Proton-coupled chloride transporter. Functions as antiport system and exchanges two chloride ions for 1 proton. Probably acts as an electrical shunt for an outwardly-directed proton pump that is linked to amino acid decarboxylation, as part of the extreme acid resistance (XAR) response. The protein is H(+)/Cl(-) exchange transporter ClcA of Escherichia coli O139:H28 (strain E24377A / ETEC).